The chain runs to 266 residues: Nitrate import ATP-binding protein NrtD (266 aa).

An ABC transporter domain is found at leucine 3–tyrosine 234. Glycine 39–serine 46 contributes to the ATP binding site.

It belongs to the ABC transporter superfamily. Nitrate/nitrite/cyanate uptake transporter (NitT) (TC 3.A.1.16) family. The complex is composed of two ATP-binding proteins (NrtC and NrtD), two transmembrane proteins (NrtB) and a solute-binding protein (NrtA).

The protein resides in the cell inner membrane. The catalysed reaction is nitrate(out) + ATP + H2O = nitrate(in) + ADP + phosphate + H(+). Part of the ABC transporter complex NrtABCD involved in nitrate uptake. The complex is probably also involved in nitrite transport. Probably responsible for energy coupling to the transport system. In Synechocystis sp. (strain ATCC 27184 / PCC 6803 / Kazusa), this protein is Nitrate import ATP-binding protein NrtD (nrtD).